The primary structure comprises 246 residues: Probable transcriptional regulatory protein CLD_1467 (246 aa).

The protein belongs to the TACO1 family.

It is found in the cytoplasm. This is Probable transcriptional regulatory protein CLD_1467 from Clostridium botulinum (strain Okra / Type B1).